A 441-amino-acid chain; its full sequence is MTMLLDGGPQFPTLGVGGFGTARHHEMSNRDAGMGLNPFTEPSHAAAFKLSPASHDLSSSQSSAFTPQASGYASSLGHHAGQVPSYGGAAFNSTRDFLFRNRNSGIADSSSAGSQHGLFANHGPPGIGEPPGHLIFPGLHEQSSSHTSSNGHVVNGQMHLGLRGDIFGRPDPYRAVPSPRTDHYAAAQFHNYNHMNMSMNVAAHHGQGAFFRYMRQPIKQELSCKWLEESTMNHPQKTCDRTFSSMHELVTHMTMEHVGGPEQNNHICYWEECPRGGKSFKAKYKLVNHIRVHTGEKPFPCPFPGCGKIFARSENLKIHKRTHTGEKPFKCEFEGCDRRFANSSDRKKHMHVHTSDKPYICKVCDKSYTHPSSLRKHMKVHESQGSDSSPAASSGYESATPPAMVSANSEEPSKNSSATHQTNNNSHNTGLLPPNFNEWYV.

The C2H2-type 1; atypical zinc finger occupies 222–257; it reads LSCKWLEESTMNHPQKTCDRTFSSMHELVTHMTMEH. The C2H2-type 2; atypical zinc finger occupies 266–293; it reads HICYWEECPRGGKSFKAKYKLVNHIRVH. C2H2-type zinc fingers lie at residues 299–323, 329–353, and 359–381; these read FPCP…KRTH, FKCE…MHVH, and YICK…MKVH. Residues 375 to 441 form a disordered region; that stretch reads RKHMKVHESQ…LPPNFNEWYV (67 aa). A compositionally biased stretch (low complexity) spans 383-399; that stretch reads SQGSDSSPAASSGYESA. Over residues 406–429 the composition is skewed to polar residues; sequence SANSEEPSKNSSATHQTNNNSHNT.

It belongs to the GLI C2H2-type zinc-finger protein family. First detected at early gastrula (stage 10.25) in the dorsal lip and prospective neural plate. Also expressed in the mesoderm at early gastrulation, with expression strongest on the dorsal side. Mesodermal expression continues at stage 12 but is hardly detectable after stage 14. As gastrulation proceeds, expression decreases in the dorsal lip and increases in the prospective neural plate. At the neural plate stage (stage 14), expressed strongly in the prospective mesencephalon and anterior rhombencephalon, after which expression becomes stronger in the anterior neural folds. At early tailbud stage (stage 20), expression becomes restricted to the dorsal region of forebrain, midbrain and hindbrain, and weakly to the dorsal trunk. After mid-tailbud stage, expression decreases in the diencephalon, appears in the lateral mesoderm of the tailbud region and becomes restricted in the dorsal part of the neural tube.

It is found in the nucleus. It localises to the cytoplasm. In terms of biological role, probably acts as a transcriptional activator. May bind to the minimal GLI-consensus sequence 5'-GGGTGGTC-3'. Can determine the ectodermal cell fate and promote the earliest step of neural and neural crest development. Involved in establishing left-right asymmetry in the embryo. The chain is Zinc finger protein ZIC 3 (zic3) from Xenopus laevis (African clawed frog).